The sequence spans 239 residues: Ribonuclease PH (239 aa).

Residues Arg86 and 124-126 (GTR) contribute to the phosphate site.

The protein belongs to the RNase PH family. In terms of assembly, homohexameric ring arranged as a trimer of dimers.

The catalysed reaction is tRNA(n+1) + phosphate = tRNA(n) + a ribonucleoside 5'-diphosphate. Phosphorolytic 3'-5' exoribonuclease that plays an important role in tRNA 3'-end maturation. Removes nucleotide residues following the 3'-CCA terminus of tRNAs; can also add nucleotides to the ends of RNA molecules by using nucleoside diphosphates as substrates, but this may not be physiologically important. Probably plays a role in initiation of 16S rRNA degradation (leading to ribosome degradation) during starvation. This is Ribonuclease PH from Rickettsia bellii (strain OSU 85-389).